Reading from the N-terminus, the 661-residue chain is UvrABC system protein B (661 aa).

The Helicase ATP-binding domain occupies 31 to 186; it reads DNIEGGEKAQ…LLNALVDIQF (156 aa). 44 to 51 is an ATP binding site; sequence GATGTGKT. A Beta-hairpin motif is present at residues 97–120; sequence YYDYYQPEAYVPSSDTYIEKDSSV. The 167-residue stretch at 435 to 601 folds into the Helicase C-terminal domain; it reads QMDDLLGEIN…TIKKEIRDLI (167 aa). The UVR domain maps to 626–661; the sequence is KAMIKKLEGQMQEAAEVLDFELAAQIRDMVIELKNM.

The protein belongs to the UvrB family. Forms a heterotetramer with UvrA during the search for lesions. Interacts with UvrC in an incision complex.

It is found in the cytoplasm. Its function is as follows. The UvrABC repair system catalyzes the recognition and processing of DNA lesions. A damage recognition complex composed of 2 UvrA and 2 UvrB subunits scans DNA for abnormalities. Upon binding of the UvrA(2)B(2) complex to a putative damaged site, the DNA wraps around one UvrB monomer. DNA wrap is dependent on ATP binding by UvrB and probably causes local melting of the DNA helix, facilitating insertion of UvrB beta-hairpin between the DNA strands. Then UvrB probes one DNA strand for the presence of a lesion. If a lesion is found the UvrA subunits dissociate and the UvrB-DNA preincision complex is formed. This complex is subsequently bound by UvrC and the second UvrB is released. If no lesion is found, the DNA wraps around the other UvrB subunit that will check the other stand for damage. This chain is UvrABC system protein B, found in Streptococcus suis (strain 98HAH33).